A 339-amino-acid chain; its full sequence is Glycerol-3-phosphate dehydrogenase [NAD(P)+] (339 aa).

4 residues coordinate NADPH: Ser-15, Tyr-16, His-36, and Lys-110. Sn-glycerol 3-phosphate-binding residues include Lys-110, Gly-139, and Thr-141. Residue Ala-143 participates in NADPH binding. Lys-195, Asp-248, Ser-258, Arg-259, and Asn-260 together coordinate sn-glycerol 3-phosphate. Lys-195 acts as the Proton acceptor in catalysis. Arg-259 contributes to the NADPH binding site. NADPH is bound by residues Val-283 and Glu-285.

The protein belongs to the NAD-dependent glycerol-3-phosphate dehydrogenase family.

The protein localises to the cytoplasm. The catalysed reaction is sn-glycerol 3-phosphate + NAD(+) = dihydroxyacetone phosphate + NADH + H(+). It carries out the reaction sn-glycerol 3-phosphate + NADP(+) = dihydroxyacetone phosphate + NADPH + H(+). It functions in the pathway membrane lipid metabolism; glycerophospholipid metabolism. Catalyzes the reduction of the glycolytic intermediate dihydroxyacetone phosphate (DHAP) to sn-glycerol 3-phosphate (G3P), the key precursor for phospholipid synthesis. In Pectobacterium carotovorum subsp. carotovorum (strain PC1), this protein is Glycerol-3-phosphate dehydrogenase [NAD(P)+].